We begin with the raw amino-acid sequence, 696 residues long: Ribonucleoside-diphosphate reductase subunit beta (696 aa).

Asp-97, Glu-127, and His-130 together coordinate Fe cation. Residue Tyr-134 is part of the active site. Residues Glu-194 and Glu-228 each contribute to the Fe cation site. Residues 377–507 (DGTIDSKRNG…FVQALCALGG (131 aa)) enclose the DOD-type homing endonuclease domain. His-577 serves as a coordination point for Fe cation.

The protein belongs to the ribonucleoside diphosphate reductase small chain family. In terms of assembly, tetramer of two alpha and two beta subunits. Fe cation serves as cofactor. Post-translationally, this protein undergoes a protein self splicing that involves a post-translational excision of the intervening region (intein) followed by peptide ligation.

It carries out the reaction a 2'-deoxyribonucleoside 5'-diphosphate + [thioredoxin]-disulfide + H2O = a ribonucleoside 5'-diphosphate + [thioredoxin]-dithiol. Its function is as follows. Provides the precursors necessary for DNA synthesis. Catalyzes the biosynthesis of deoxyribonucleotides from the corresponding ribonucleotides. The sequence is that of Ribonucleoside-diphosphate reductase subunit beta (nrdB) from Aquifex aeolicus (strain VF5).